Here is a 271-residue protein sequence, read N- to C-terminus: Type III pantothenate kinase (271 aa).

6–13 (DVRNTNIV) provides a ligand contact to ATP. 109-112 (GADR) contacts substrate. Asp-111 serves as the catalytic Proton acceptor. A K(+)-binding site is contributed by Asp-131. Thr-134 contributes to the ATP binding site. Thr-186 lines the substrate pocket.

It belongs to the type III pantothenate kinase family. In terms of assembly, homodimer. The cofactor is NH4(+). It depends on K(+) as a cofactor.

The protein localises to the cytoplasm. The enzyme catalyses (R)-pantothenate + ATP = (R)-4'-phosphopantothenate + ADP + H(+). It functions in the pathway cofactor biosynthesis; coenzyme A biosynthesis; CoA from (R)-pantothenate: step 1/5. Functionally, catalyzes the phosphorylation of pantothenate (Pan), the first step in CoA biosynthesis. The sequence is that of Type III pantothenate kinase from Rhodococcus opacus (strain B4).